The primary structure comprises 95 residues: DNA-directed RNA polymerase subunit Rpo6 (95 aa).

It belongs to the archaeal Rpo6/eukaryotic RPB6 RNA polymerase subunit family. In terms of assembly, part of the RNA polymerase complex.

It is found in the cytoplasm. It catalyses the reaction RNA(n) + a ribonucleoside 5'-triphosphate = RNA(n+1) + diphosphate. Its function is as follows. DNA-dependent RNA polymerase (RNAP) catalyzes the transcription of DNA into RNA using the four ribonucleoside triphosphates as substrates. This is DNA-directed RNA polymerase subunit Rpo6 from Saccharolobus islandicus (strain M.16.27) (Sulfolobus islandicus).